We begin with the raw amino-acid sequence, 341 residues long: Hyaluronidase A (341 aa).

N-linked (GlcNAc...) asparagine glycosylation is found at N3, N68, and N83. Disulfide bonds link C23–C311 and C189–C201.

This sequence belongs to the glycosyl hydrolase 56 family. Expressed by the venom gland.

The protein resides in the secreted. The catalysed reaction is Random hydrolysis of (1-&gt;4)-linkages between N-acetyl-beta-D-glucosamine and D-glucuronate residues in hyaluronate.. May hydrolyze high molecular weight hyaluronic acid to produce small oligosaccharides. In Vespa velutina (Asian yellow-legged hornet), this protein is Hyaluronidase A.